The chain runs to 289 residues: ATP synthase mitochondrial F1 complex assembly factor 2 (289 aa).

The N-terminal 40 residues, 1-40 (MWRRCLRLRDVGRRLLNLPRSGLTASEGLGPKLPTPIRAY), are a transit peptide targeting the mitochondrion. K133 is subject to N6-succinyllysine.

This sequence belongs to the ATP12 family. Interacts with ATP5F1B; involved in the assembly of the F1 component of the mitochondrial ATP synthase (ATPase). Interacts with FMC1.

The protein resides in the mitochondrion inner membrane. Functionally, plays a role in the assembly of the F1 component of the mitochondrial ATP synthase (ATPase). In Bos taurus (Bovine), this protein is ATP synthase mitochondrial F1 complex assembly factor 2 (ATPAF2).